The sequence spans 59 residues: Conotoxin reg3.15 (59 aa).

Positions Arg-1–Ala-15 are cleaved as a signal peptide. Positions Ile-16–Trp-44 are excised as a propeptide. Disulfide bonds link Cys-45–Cys-59, Cys-46–Cys-55, and Cys-51–Cys-58.

Belongs to the conotoxin M superfamily. Expressed by the venom duct.

It localises to the secreted. This is Conotoxin reg3.15 from Conus regius (Crown cone).